We begin with the raw amino-acid sequence, 432 residues long: Adenosine 3'-phospho 5'-phosphosulfate transporter 1 (432 aa).

9 consecutive transmembrane segments (helical) span residues Trp5 to Glu25, Val40 to Phe60, Ala109 to Leu129, Phe154 to Cys174, Trp238 to Gly258, Pro265 to Thr285, Ser299 to Leu319, Leu353 to Leu373, and Gly387 to Leu407. The residue at position 427 (Ser427) is a Phosphoserine.

This sequence belongs to the nucleotide-sugar transporter family. SLC35B subfamily. In terms of tissue distribution, highly expressed in the placenta, pancreas, mammary gland and skeletal muscle. Weakly or not expressed in colon, heart and prostate. Expressed in the brain, predominantly in frontal lobe gray matter, subcortical frontal white matter and cerebellum.

The protein localises to the golgi apparatus membrane. It carries out the reaction 3'-phosphoadenylyl sulfate(in) + adenosine 3',5'-bisphosphate(out) = 3'-phosphoadenylyl sulfate(out) + adenosine 3',5'-bisphosphate(in). In terms of biological role, probably functions as a 3'-phosphoadenylyl sulfate:adenosine 3',5'-bisphosphate antiporter at the Golgi membranes. Mediates the transport from the cytosol into the lumen of the Golgi of 3'-phosphoadenylyl sulfate/adenosine 3'-phospho 5'-phosphosulfate (PAPS), a universal sulfuryl donor for sulfation events that take place in that compartment. In Homo sapiens (Human), this protein is Adenosine 3'-phospho 5'-phosphosulfate transporter 1.